The following is a 246-amino-acid chain: Probable transcriptional regulatory protein GK2594 (246 aa).

It belongs to the TACO1 family.

The protein resides in the cytoplasm. The polypeptide is Probable transcriptional regulatory protein GK2594 (Geobacillus kaustophilus (strain HTA426)).